Here is a 320-residue protein sequence, read N- to C-terminus: ATP-dependent 6-phosphofructokinase isozyme 1 (320 aa).

Glycine 12 contributes to the ATP binding site. Residues 22-26 and 55-60 contribute to the ADP site; these read RGVVR and RYSVSD. ATP is bound by residues 73 to 74 and 103 to 106; these read RF and GDGS. Residue aspartate 104 coordinates Mg(2+). 126–128 contacts substrate; sequence TID. Aspartate 128 functions as the Proton acceptor in the catalytic mechanism. Arginine 155 serves as a coordination point for ADP. Substrate is bound by residues arginine 163 and 170–172; that span reads MGR. Residues 186 to 188, lysine 212, and 214 to 216 contribute to the ADP site; these read GCE and KKH. Residues glutamate 223, arginine 244, and 250–253 contribute to the substrate site; that span reads HIQR.

This sequence belongs to the phosphofructokinase type A (PFKA) family. ATP-dependent PFK group I subfamily. Prokaryotic clade 'B1' sub-subfamily. As to quaternary structure, homotetramer. Mg(2+) serves as cofactor.

It localises to the cytoplasm. It catalyses the reaction beta-D-fructose 6-phosphate + ATP = beta-D-fructose 1,6-bisphosphate + ADP + H(+). The protein operates within carbohydrate degradation; glycolysis; D-glyceraldehyde 3-phosphate and glycerone phosphate from D-glucose: step 3/4. With respect to regulation, allosterically activated by ADP and other diphosphonucleosides, and allosterically inhibited by phosphoenolpyruvate. Catalyzes the phosphorylation of D-fructose 6-phosphate to fructose 1,6-bisphosphate by ATP, the first committing step of glycolysis. The chain is ATP-dependent 6-phosphofructokinase isozyme 1 from Shigella boydii serotype 18 (strain CDC 3083-94 / BS512).